The primary structure comprises 286 residues: 2-hydroxy-6-oxononadienedioate/2-hydroxy-6-oxononatrienedioate hydrolase 2 (286 aa).

Residue H266 is the Proton acceptor of the active site.

Belongs to the AB hydrolase superfamily. MhpC family. Homodimer.

The catalysed reaction is (2Z,4E)-2-hydroxy-6-oxonona-2,4-dienedioate + H2O = (2Z)-2-hydroxypenta-2,4-dienoate + succinate + H(+). It catalyses the reaction (2Z,4E,7E)-2-hydroxy-6-oxonona-2,4,7-trienedioate + H2O = (2Z)-2-hydroxypenta-2,4-dienoate + fumarate + H(+). The protein operates within aromatic compound metabolism; 3-phenylpropanoate degradation. Catalyzes the cleavage of the C5-C6 bond of 2-hydroxy-6-oxononadienedioate and 2-hydroxy-6-oxononatrienedioate, a dienol ring fission product of the bacterial meta-cleavage pathway for degradation of phenylpropionic acid. In Pseudomonas putida (Arthrobacter siderocapsulatus), this protein is 2-hydroxy-6-oxononadienedioate/2-hydroxy-6-oxononatrienedioate hydrolase 2.